The chain runs to 470 residues: Glutamate--tRNA ligase (470 aa).

The 'HIGH' region motif lies at 12 to 22 (PSPTGIFHVGG). Positions 103, 105, 125, and 127 each coordinate Zn(2+). The short motif at 236–240 (KLSKR) is the 'KMSKS' region element. Residue lysine 239 coordinates ATP.

The protein belongs to the class-I aminoacyl-tRNA synthetase family. Glutamate--tRNA ligase type 1 subfamily. Monomer. Zn(2+) is required as a cofactor.

Its subcellular location is the cytoplasm. The catalysed reaction is tRNA(Glu) + L-glutamate + ATP = L-glutamyl-tRNA(Glu) + AMP + diphosphate. Its function is as follows. Catalyzes the attachment of glutamate to tRNA(Glu) in a two-step reaction: glutamate is first activated by ATP to form Glu-AMP and then transferred to the acceptor end of tRNA(Glu). This chain is Glutamate--tRNA ligase, found in Frankia alni (strain DSM 45986 / CECT 9034 / ACN14a).